The following is a 1147-amino-acid chain: GPI inositol-deacylase (1147 aa).

The tract at residues 1 to 94 (MRRHSSGSSE…RTSPSSPLGL (94 aa)) is disordered. Residue Asn23 is glycosylated (N-linked (GlcNAc...) asparagine). Basic and acidic residues predominate over residues 28-49 (SAKDSRSSAHPTTKLDHNRNAD). A compositionally biased stretch (low complexity) spans 50 to 63 (RPPSFSISRRSSSI). Asn74 carries an N-linked (GlcNAc...) asparagine glycan. Residues 127–147 (AITFSALVAAIVGIGFLVAVL) traverse the membrane as a helical segment. Ser310 is an active-site residue. The next 2 helical transmembrane spans lie at 795 to 815 (LYMR…ALVL) and 843 to 863 (IPLM…MAPA). 2 N-linked (GlcNAc...) asparagine glycosylation sites follow: Asn865 and Asn873. 3 helical membrane passes run 893–913 (PLFL…CTVF), 918–938 (LTLT…PGWI), and 965–985 (VLLL…VACL). N-linked (GlcNAc...) asparagine glycosylation occurs at Asn1011. A run of 3 helical transmembrane segments spans residues 1015–1035 (SIFI…VVWV), 1052–1072 (VLSV…KMIP), and 1084–1104 (LLLF…AYTL).

Belongs to the GPI inositol-deacylase family.

Its subcellular location is the endoplasmic reticulum membrane. Involved in inositol deacylation of GPI-anchored proteins which plays important roles in the quality control and ER-associated degradation of GPI-anchored proteins. The chain is GPI inositol-deacylase (BST1) from Chaetomium globosum (strain ATCC 6205 / CBS 148.51 / DSM 1962 / NBRC 6347 / NRRL 1970) (Soil fungus).